A 384-amino-acid polypeptide reads, in one-letter code: 8-amino-7-oxononanoate synthase (384 aa).

R21 is a binding site for substrate. G108 to Y109 provides a ligand contact to pyridoxal 5'-phosphate. H133 lines the substrate pocket. Pyridoxal 5'-phosphate is bound by residues S179, H207, and T233. Residue K236 is modified to N6-(pyridoxal phosphate)lysine. T350 lines the substrate pocket.

Belongs to the class-II pyridoxal-phosphate-dependent aminotransferase family. BioF subfamily. In terms of assembly, homodimer. Pyridoxal 5'-phosphate serves as cofactor.

It catalyses the reaction 6-carboxyhexanoyl-[ACP] + L-alanine + H(+) = (8S)-8-amino-7-oxononanoate + holo-[ACP] + CO2. It functions in the pathway cofactor biosynthesis; biotin biosynthesis. In terms of biological role, catalyzes the decarboxylative condensation of pimeloyl-[acyl-carrier protein] and L-alanine to produce 8-amino-7-oxononanoate (AON), [acyl-carrier protein], and carbon dioxide. The sequence is that of 8-amino-7-oxononanoate synthase from Buchnera aphidicola subsp. Baizongia pistaciae (strain Bp).